A 902-amino-acid chain; its full sequence is Leucine-rich repeat-containing G-protein coupled receptor 5A (902 aa).

Residues 1–22 (MDTSRTSLFLCSVLYSLQLVGS) form the signal peptide. Over 23–557 (ARPGKQHRSC…DHLFGSWLTR (535 aa)) the chain is Extracellular. Cystine bridges form between cysteine 32–cysteine 38 and cysteine 36–cysteine 49. Residues 32-61 (CPTPCECEQDGMLVRVDCSDRGLTGLPRNI) form the LRRNT domain. LRR repeat units lie at residues 41 to 61 (DGML…PRNI), 62 to 85 (SIFT…ALHN), 86 to 109 (LHFL…AFAG), 111 to 133 (GSLK…ALQN), 134 to 157 (LRSL…SFNG), 159 to 181 (FSLR…ALES), 182 to 205 (LSAL…AFGN), 207 to 229 (SSLV…CFDG), 230 to 253 (LHSL…IKTL), 254 to 276 (KNLK…AFIG), 278 to 300 (PSLI…AFQH), 301 to 324 (LPEL…LTGT), 325 to 347 (TSLE…VCNQ), 348 to 372 (LPNL…GCQR), 374 to 393 (QKID…TFQQ), 394 to 417 (LVGL…SFSS), and 418 to 441 (LPSL…GLHG). N-linked (GlcNAc...) asparagine glycans are attached at residues asparagine 60 and asparagine 74. The N-linked (GlcNAc...) asparagine glycan is linked to asparagine 205. A disulfide bridge links cysteine 345 with cysteine 370. The cysteines at positions 476 and 537 are disulfide-linked. Asparagine 496 carries an N-linked (GlcNAc...) asparagine glycan. A helical transmembrane segment spans residues 558 to 578 (IGVWLIVLLSFVCNALVIATV). At 579–589 (FRPLSYVPSIK) the chain is on the cytoplasmic side. A helical transmembrane segment spans residues 590–610 (LLIGLIAIINTLMGLSSGVLA). One copy of the LRR 18 repeat lies at 598–619 (INTLMGLSSGVLATVDALTFGN). Over 611 to 634 (TVDALTFGNFAQYGAWWESGVGCQ) the chain is Extracellular. An intrachain disulfide couples cysteine 633 to cysteine 708. A helical membrane pass occupies residues 635–655 (ITGFLSVFAAETSVFLLTVAA). Topologically, residues 656–678 (LERGFSIKCTTKFETKSSFLSVK) are cytoplasmic. Residues 679–699 (LSIVFCFLLSIIIAVSPLMSG) traverse the membrane as a helical segment. Topologically, residues 700-718 (STYGTSPFCFPLLFGDPSS) are extracellular. Residues 719–739 (MVFMVALVLLNSLCFLVMTVA) traverse the membrane as a helical segment. Over 740-763 (YTKLYCSLEKGELENVWDCSMVKH) the chain is Cytoplasmic. A helical membrane pass occupies residues 764-784 (IALLLFTNCILYCPVAFLSFS). Residues 785–798 (SLLNLTFISPEVNK) lie on the Extracellular side of the membrane. Asparagine 788 and asparagine 797 each carry an N-linked (GlcNAc...) asparagine glycan. Residues 799–819 (SILLLIIPLPACLNPLLYILF) traverse the membrane as a helical segment. At 820 to 902 (NPHFKEDIGS…LSAVAFVPCH (83 aa)) the chain is on the cytoplasmic side.

This sequence belongs to the G-protein coupled receptor 1 family. As to expression, expressed in the developing epithelial stem cells of the intestine.

Its subcellular location is the cell membrane. The protein localises to the golgi apparatus. It localises to the trans-Golgi network membrane. Its function is as follows. Receptor for R-spondins that potentiates the canonical Wnt signaling pathway and acts as a stem cell marker of the intestinal epithelium and the hair follicle. Upon binding to R-spondins (RSPO1, RSPO2, RSPO3 or RSPO4), associates with phosphorylated LRP6 and frizzled receptors that are activated by extracellular Wnt receptors, triggering the canonical Wnt signaling pathway to increase expression of target genes. In contrast to classical G-protein coupled receptors, does not activate heterotrimeric G-proteins to transduce the signal. Involved in the development and/or maintenance of the adult intestinal stem cells during postembryonic development. The protein is Leucine-rich repeat-containing G-protein coupled receptor 5A (lgr5-a) of Xenopus laevis (African clawed frog).